The following is a 595-amino-acid chain: O-phosphoseryl-tRNA(Sec) selenium transferase (595 aa).

Arg-75 lines the pyridoxal 5'-phosphate pocket. The phosphate loop (P-loop) stretch occupies residues 96 to 106 (GRSGDLFSEQP). Substrate is bound by residues Arg-97, Ser-98, and Gln-105. The segment covering 174–187 (RTVTKDSTSATSAA) has biased composition (polar residues). Disordered regions lie at residues 174 to 208 (RTVT…TSLP) and 257 to 278 (STNR…TPTS). Over residues 196-205 (EADRDRHDRT) the composition is skewed to basic and acidic residues. Arg-358 lines the tRNA pocket. Residue Lys-371 is modified to N6-(pyridoxal phosphate)lysine. Position 400 (Arg-400) interacts with substrate.

It belongs to the SepSecS family. In terms of assembly, homotetramer composed of two homodimers. Requires pyridoxal 5'-phosphate as cofactor.

Its subcellular location is the cytoplasm. It catalyses the reaction O-phospho-L-seryl-tRNA(Sec) + selenophosphate + H2O = L-selenocysteinyl-tRNA(Sec) + 2 phosphate. The protein operates within aminoacyl-tRNA biosynthesis; selenocysteinyl-tRNA(Sec) biosynthesis; selenocysteinyl-tRNA(Sec) from L-seryl-tRNA(Sec) (archaeal/eukaryal route): step 2/2. Its function is as follows. Converts O-phosphoseryl-tRNA(Sec) to selenocysteinyl-tRNA(Sec) required for selenoprotein biosynthesis. This chain is O-phosphoseryl-tRNA(Sec) selenium transferase, found in Leishmania donovani.